The chain runs to 318 residues: ADP-ribosyl cyclase/cyclic ADP-ribose hydrolase 2 (318 aa).

The first 32 residues, 1–32 (MAAQGCAASRLLQLLLQLLLLLLLLAAGGARA), serve as a signal peptide directing secretion. 3 cysteine pairs are disulfide-bonded: Cys-51-Cys-67, Cys-83-Cys-163, and Cys-144-Cys-157. N-linked (GlcNAc...) asparagine glycosylation is found at Asn-66 and Asn-95. NAD(+) is bound at residue Trp-109. Residue Trp-109 participates in nicotinamide binding. Residue Asn-148 is glycosylated (N-linked (GlcNAc...) asparagine). Position 172 (Trp-172) interacts with NAD(+). An N-linked (GlcNAc...) asparagine glycan is attached at Asn-192. Residue Glu-210 participates in NAD(+) binding. Disulfide bonds link Cys-238–Cys-259 and Cys-271–Cys-280. Ala-293 is lipidated: GPI-anchor amidated alanine. The propeptide at 294–318 (PSLYTEQRAGLIIPLFLVLASRTQL) is removed in mature form.

It belongs to the ADP-ribosyl cyclase family. Homodimer. As to expression, expressed in various tissues including placenta, lung, liver and kidney.

The protein localises to the cell membrane. It carries out the reaction NAD(+) + H2O = ADP-D-ribose + nicotinamide + H(+). The catalysed reaction is NAD(+) = cyclic ADP-beta-D-ribose + nicotinamide + H(+). The enzyme catalyses cyclic ADP-beta-D-ribose + H2O = ADP-D-ribose. ADP-ribosyl cyclase and cADPR hydrolase activities are both activated by Zn(2+) or Mn(2+), and inhibited by Cu(2+), while Mg(2+) and Ca(2+) do not have any significant influence. Catalyzes both the synthesis of cyclic ADP-beta-D-ribose (cADPR) from NAD(+), and its hydrolysis to ADP-D-ribose (ADPR). Cyclic ADPR is known to serve as an endogenous second messenger that elicits calcium release from intracellular stores, and thus regulates the mobilization of intracellular calcium. May be involved in pre-B-cell growth. The polypeptide is ADP-ribosyl cyclase/cyclic ADP-ribose hydrolase 2 (BST1) (Homo sapiens (Human)).